The primary structure comprises 240 residues: Uridylate cyclase (240 aa).

Residues 45–180 (TYLYADMANS…RAPNLAAKLS (136 aa)) form the Guanylate cyclase domain. Tyrosine 48 is a binding site for a ribonucleoside 5'-triphosphate. The Mn(2+) site is built by aspartate 50 and aspartate 94. Arginine 95 contacts a ribonucleoside 5'-triphosphate.

Belongs to the adenylyl cyclase class-4/guanylyl cyclase family. Pyrimidine cyclase subfamily. In terms of assembly, homodimer. The cofactor is Mn(2+).

It localises to the cytoplasm. The catalysed reaction is UTP = 3',5'-cyclic UMP + diphosphate. Pycsar (pyrimidine cyclase system for antiphage resistance) provides immunity against bacteriophage. The pyrimidine cyclase (PycC) synthesizes cyclic nucleotides in response to infection; these serve as specific second messenger signals. The signals activate the adjacent effector, leading to bacterial cell death and abortive phage infection. A clade B Pycsar system. Its function is as follows. The pyrimidine cyclase gene of a two-gene Pycsar system, weakly generates cyclic UMP (cUMP) from UTP, has little to no activity on ATP, CTP or GTP. Expression of this and adjacent effector RsmPycTM (AC A0A1V0HUU2) probably confers resistance to bacteriophage. The genes are probably only expressed in response to bacteriophage infection. This Rhodovulum sp. (strain MB263) protein is Uridylate cyclase.